The primary structure comprises 457 residues: MEIPPGLETTKRKVAHSDEHGFSDQVRVPNVIVMVGLPARGKTYISKKLCRYLKWTGFTTKVFNVGEYRRSDANAADAIHGANASFFSPNNADALKVRAESARRAMEDMADYLNSGTGGVAIFDATNTTKDRRRIIIDFCKKQRLRCFFIESVCDDPAIIDCNVTDVKVNSPDYKGLMTAEQAKEDFMNRIENYKKQYEPLDESEDESLSFIKVINAGRSFKVHQVRGHVQSRVVYFLMNIHLLPRSIYLTRHGQSEYNAMGRLGGDSPLTEDGQKYASALADFFEEEEVPGLRVWCSQKVRAAQTAQHLKPDFHTEYWKALDELDAGICEGLTYEDILQRYPKQADDRATDKYHYRYPSGESYEDVVSRLEPVIMELERQANVLVVSHQAVLRCVLAYFYDRPLSELPYIDIPLHSLVKLTPRAYHCDSTIYALDLESGEWTETSDQLPLCDSPRD.

The tract at residues methionine 1–histidine 20 is disordered. The interval methionine 1–leucine 244 is 6-phosphofructo-2-kinase. Basic and acidic residues predominate over residues threonine 9–histidine 20. ATP is bound at residue glycine 36–tyrosine 44. Beta-D-fructose 6-phosphate-binding residues include arginine 69 and arginine 98. The active site involves aspartate 124. Threonine 126 and arginine 132 together coordinate beta-D-fructose 6-phosphate. Cysteine 154 is a catalytic residue. Asparagine 163 to lysine 168 lines the ATP pocket. Lysine 168, arginine 190, and tyrosine 194 together coordinate beta-D-fructose 6-phosphate. The tract at residues proline 245–aspartate 457 is fructose-2,6-bisphosphatase. Arginine 252 contacts beta-D-fructose 2,6-bisphosphate. Catalysis depends on histidine 253, which acts as the Tele-phosphohistidine intermediate. Residues asparagine 259 and glycine 265 each contribute to the beta-D-fructose 2,6-bisphosphate site. Catalysis depends on glutamate 324, which acts as the Proton donor/acceptor. Positions 335, 349, 353, 364, 390, and 394 each coordinate beta-D-fructose 2,6-bisphosphate. Alanine 346–arginine 349 lines the ATP pocket. Residues glutamine 390 to arginine 394 and tyrosine 426 each bind ATP.

The protein in the C-terminal section; belongs to the phosphoglycerate mutase family.

It carries out the reaction beta-D-fructose 2,6-bisphosphate + H2O = beta-D-fructose 6-phosphate + phosphate. The enzyme catalyses beta-D-fructose 6-phosphate + ATP = beta-D-fructose 2,6-bisphosphate + ADP + H(+). In terms of biological role, synthesis and degradation of fructose 2,6-bisphosphate. This Caenorhabditis elegans protein is 6-phosphofructo-2-kinase/fructose-2,6-bisphosphatase.